Consider the following 231-residue polypeptide: AA9 family lytic polysaccharide monooxygenase F (231 aa).

Positions 1 to 17 (MLPSISLLLAAALGTSA) are cleaved as a signal peptide. Residues H18, D50, and H89 each coordinate Cu(2+). Residue D50 participates in O2 binding. Cystine bridges form between C59–C177 and C147–C231. O2-binding residues include H163 and Q172. A Cu(2+)-binding site is contributed by Y174.

It belongs to the polysaccharide monooxygenase AA9 family. The cofactor is Cu(2+).

The protein localises to the secreted. It catalyses the reaction [(1-&gt;4)-beta-D-glucosyl]n+m + reduced acceptor + O2 = 4-dehydro-beta-D-glucosyl-[(1-&gt;4)-beta-D-glucosyl]n-1 + [(1-&gt;4)-beta-D-glucosyl]m + acceptor + H2O.. Its function is as follows. Lytic polysaccharide monooxygenase (LPMO) that depolymerizes crystalline and amorphous polysaccharides via the oxidation of scissile alpha- or beta-(1-4)-glycosidic bonds, yielding C1 oxidation products. Catalysis by LPMOs requires the reduction of the active-site copper from Cu(II) to Cu(I) by a reducing agent and H(2)O(2) or O(2) as a cosubstrate. The sequence is that of AA9 family lytic polysaccharide monooxygenase F (gh61-6) from Neurospora crassa (strain ATCC 24698 / 74-OR23-1A / CBS 708.71 / DSM 1257 / FGSC 987).